A 79-amino-acid polypeptide reads, in one-letter code: Acyl carrier protein (79 aa).

The region spanning 2–77 (SDIEARVKKI…LAIDYAKSHA (76 aa)) is the Carrier domain. Ser37 is subject to O-(pantetheine 4'-phosphoryl)serine.

This sequence belongs to the acyl carrier protein (ACP) family. In terms of processing, 4'-phosphopantetheine is transferred from CoA to a specific serine of apo-ACP by AcpS. This modification is essential for activity because fatty acids are bound in thioester linkage to the sulfhydryl of the prosthetic group.

It localises to the cytoplasm. It functions in the pathway lipid metabolism; fatty acid biosynthesis. Functionally, carrier of the growing fatty acid chain in fatty acid biosynthesis. The chain is Acyl carrier protein from Methylibium petroleiphilum (strain ATCC BAA-1232 / LMG 22953 / PM1).